A 180-amino-acid polypeptide reads, in one-letter code: UPF0340 protein YwlG (180 aa).

This sequence belongs to the UPF0340 family.

The chain is UPF0340 protein YwlG (ywlG) from Bacillus subtilis (strain 168).